Reading from the N-terminus, the 811-residue chain is tRNA(Met) cytidine acetyltransferase TmcA (811 aa).

ATP-binding residues include Gln267 and Arg440. The N-acetyltransferase domain occupies 474 to 663; sequence RKEVYLEEPD…GEFTAIVLKP (190 aa). Acetyl-CoA contacts are provided by residues 590–592, Glu630, and Arg637; that span reads IAT.

Belongs to the TmcA family.

It is found in the cytoplasm. The enzyme catalyses cytidine(34) in elongator tRNA(Met) + acetyl-CoA + ATP + H2O = N(4)-acetylcytidine(34) in elongator tRNA(Met) + ADP + phosphate + CoA + H(+). It catalyses the reaction a cytidine in RNA + acetyl-CoA + ATP + H2O = an N(4)-acetylcytidine in RNA + ADP + phosphate + CoA + H(+). It carries out the reaction a cytidine in tRNA + acetyl-CoA + ATP + H2O = an N(4)-acetylcytidine in tRNA + ADP + phosphate + CoA + H(+). The catalysed reaction is a cytidine in mRNA + acetyl-CoA + ATP + H2O = an N(4)-acetylcytidine in mRNA + ADP + phosphate + CoA + H(+). In terms of biological role, catalyzes the formation of N(4)-acetylcytidine (ac(4)C) at the wobble position of tRNA(Met), by using acetyl-CoA as an acetyl donor and ATP (or GTP). Its function is as follows. Catalyzes the formation of 404 N(4)-acetylcytidine (ac(4)C) sites in RNA, almost always on the middle C of a CCG motif. There 173 ac(4)C sites in rRNA, 35 in non-coding (nc)RNA, 119 in mRNA and 77 in tRNA. More acetylation is observed at 85 and 95 than at 65 or 75 degrees Celsius. This chain is tRNA(Met) cytidine acetyltransferase TmcA, found in Thermococcus kodakarensis (strain ATCC BAA-918 / JCM 12380 / KOD1) (Pyrococcus kodakaraensis (strain KOD1)).